A 452-amino-acid chain; its full sequence is Pup--protein ligase (452 aa).

Residue Glu9 coordinates Mg(2+). Arg53 is an ATP binding site. Tyr55 serves as a coordination point for Mg(2+). Asp57 functions as the Proton acceptor in the catalytic mechanism. Glu63 contacts Mg(2+). The ATP site is built by Thr66 and Trp419.

Belongs to the Pup ligase/Pup deamidase family. Pup-conjugating enzyme subfamily.

It carries out the reaction ATP + [prokaryotic ubiquitin-like protein]-L-glutamate + [protein]-L-lysine = ADP + phosphate + N(6)-([prokaryotic ubiquitin-like protein]-gamma-L-glutamyl)-[protein]-L-lysine.. The protein operates within protein degradation; proteasomal Pup-dependent pathway. Its pathway is protein modification; protein pupylation. In terms of biological role, catalyzes the covalent attachment of the prokaryotic ubiquitin-like protein modifier Pup to the proteasomal substrate proteins, thereby targeting them for proteasomal degradation. This tagging system is termed pupylation. The ligation reaction involves the side-chain carboxylate of the C-terminal glutamate of Pup and the side-chain amino group of a substrate lysine. The sequence is that of Pup--protein ligase from Actinosynnema mirum (strain ATCC 29888 / DSM 43827 / JCM 3225 / NBRC 14064 / NCIMB 13271 / NRRL B-12336 / IMRU 3971 / 101).